A 684-amino-acid polypeptide reads, in one-letter code: Glycine--tRNA ligase beta subunit (684 aa).

The protein belongs to the class-II aminoacyl-tRNA synthetase family. In terms of assembly, tetramer of two alpha and two beta subunits.

The protein localises to the cytoplasm. The enzyme catalyses tRNA(Gly) + glycine + ATP = glycyl-tRNA(Gly) + AMP + diphosphate. This chain is Glycine--tRNA ligase beta subunit, found in Pseudomonas syringae pv. tomato (strain ATCC BAA-871 / DC3000).